The sequence spans 134 residues: uncharacterized protein (134 aa).

Transmembrane regions (helical) follow at residues 21 to 41 (FSTT…LYLI), 52 to 72 (LVLL…TPYE), and 95 to 115 (IVMA…VYII).

It is found in the host membrane. This is an uncharacterized protein from Acidianus two-tailed virus (ATV).